Here is an 844-residue protein sequence, read N- to C-terminus: DNA mismatch repair protein MutS (844 aa).

610-617 (GPNMGGKS) serves as a coordination point for ATP.

This sequence belongs to the DNA mismatch repair MutS family.

In terms of biological role, this protein is involved in the repair of mismatches in DNA. It is possible that it carries out the mismatch recognition step. This protein has a weak ATPase activity. The chain is DNA mismatch repair protein MutS from Francisella tularensis subsp. tularensis (strain WY96-3418).